A 416-amino-acid chain; its full sequence is Calreticulin (416 aa).

The N-terminal stretch at 1-17 (MLLSVPLLLGLLGLAAA) is a signal peptide. The tract at residues 18-197 (DPAIYFKEQF…NSQVESGSLE (180 aa)) is N-domain. Residue Q26 participates in Ca(2+) binding. Position 48 is an N6-acetyllysine (K48). Ca(2+)-binding residues include K62 and K64. At K64 the chain carries N6-(2-hydroxyisobutyryl)lysine. A disulfide bridge links C105 with C137. An alpha-D-glucoside contacts are provided by Y109, K111, Y128, and D135. Position 159 is an N6-acetyllysine (K159). A 1-1 repeat occupies 191–202 (VESGSLEDDWDF). The 4 X approximate repeats stretch occupies residues 191 to 255 (VESGSLEDDW…DAKKPEDWDE (65 aa)). Positions 193-277 (SGSLEDDWDF…NPEYKGEWKP (85 aa)) are disordered. Residues 198–308 (DDWDFLPPKK…YSPDANIYAY (111 aa)) form a P-domain region. The segment covering 207-251 (KIKDPDAAKPEDWDERAKIDDPTDSKPEDWDKPEHIPDPDAKKPE) has biased composition (basic and acidic residues). The residue at position 209 (K209) is an N6-acetyllysine. A run of 6 repeats spans residues 210 to 221 (DPDAAKPEDWDE), 227 to 238 (DPTDSKPEDWDK), 244 to 255 (DPDAKKPEDWDE), 259 to 269 (GEWEPPVIQNP), 273 to 283 (GEWKPRQIDNP), and 287 to 297 (GTWIHPEIDNP). The tract at residues 237–270 (DKPEHIPDPDAKKPEDWDEEMDGEWEPPVIQNPE) is interaction with PPIB. The segment covering 252 to 261 (DWDEEMDGEW) has biased composition (acidic residues). A 3 X approximate repeats region spans residues 259-297 (GEWEPPVIQNPEYKGEWKPRQIDNPDYKGTWIHPEIDNP). The interval 309–416 (DSFAVLGLDL…ESPGQAKDEL (108 aa)) is C-domain. D317 lines the an alpha-D-glucoside pocket. D328 serves as a coordination point for Ca(2+). Residues 350–416 (TKAAEKQMKD…ESPGQAKDEL (67 aa)) form a disordered region. The segment covering 352 to 379 (AAEKQMKDKQDEEQRLKEEEEDKKRKEE) has biased composition (basic and acidic residues). Acidic residues predominate over residues 380 to 408 (EEAEDKEDDDDRDEDEDEEDEKEEDEEES). The Prevents secretion from ER signature appears at 413–416 (KDEL).

It belongs to the calreticulin family. In terms of assembly, monomer. Interacts with GABARAP, NR3C1, PDIA3/ERp57 and TRIM21. Interacts (via P-domain) with PDIA5. Interacts with PPIB. Interacts with SPACA9. Component of an EIF2 complex at least composed of CELF1/CUGBP1, CALR, CALR3, EIF2S1, EIF2S2, HSP90B1 and HSPA5. Interacts with CLCC1.

The protein resides in the endoplasmic reticulum lumen. Its subcellular location is the cytoplasm. The protein localises to the cytosol. It is found in the cytolytic granule. It localises to the secreted. The protein resides in the extracellular space. Its subcellular location is the extracellular matrix. The protein localises to the cell surface. It is found in the sarcoplasmic reticulum lumen. It localises to the cytoplasmic vesicle. The protein resides in the secretory vesicle. Its subcellular location is the cortical granule. Functionally, calcium-binding chaperone that promotes folding, oligomeric assembly and quality control in the endoplasmic reticulum (ER) via the calreticulin/calnexin cycle. This lectin interacts transiently with almost all of the monoglucosylated glycoproteins that are synthesized in the ER. Interacts with the DNA-binding domain of NR3C1 and mediates its nuclear export. Involved in maternal gene expression regulation. May participate in oocyte maturation via the regulation of calcium homeostasis. Present in the cortical granules of non-activated oocytes, is exocytosed during the cortical reaction in response to oocyte activation and might participate in the block to polyspermy. This chain is Calreticulin (Calr), found in Mus musculus (Mouse).